A 271-amino-acid chain; its full sequence is Energy-coupling factor transporter ATP-binding protein EcfA (271 aa).

The ABC transporter domain occupies 2-231; it reads ISIQNLTFYY…PLFLQQYKLT (230 aa). 34 to 41 lines the ATP pocket; that stretch reads GHNGSGKS.

The protein belongs to the ABC transporter superfamily. Energy-coupling factor EcfA family. As to quaternary structure, forms a stable energy-coupling factor (ECF) transporter complex composed of 2 membrane-embedded substrate-binding proteins (S component), 2 ATP-binding proteins (A component) and 2 transmembrane proteins (T component).

The protein localises to the cell membrane. Its function is as follows. ATP-binding (A) component of a common energy-coupling factor (ECF) ABC-transporter complex. Unlike classic ABC transporters this ECF transporter provides the energy necessary to transport a number of different substrates. In Aster yellows witches'-broom phytoplasma (strain AYWB), this protein is Energy-coupling factor transporter ATP-binding protein EcfA.